The following is a 96-amino-acid chain: Small ribosomal subunit protein bS18 (96 aa).

This sequence belongs to the bacterial ribosomal protein bS18 family. Part of the 30S ribosomal subunit. Forms a tight heterodimer with protein bS6.

In terms of biological role, binds as a heterodimer with protein bS6 to the central domain of the 16S rRNA, where it helps stabilize the platform of the 30S subunit. In Borrelia garinii subsp. bavariensis (strain ATCC BAA-2496 / DSM 23469 / PBi) (Borreliella bavariensis), this protein is Small ribosomal subunit protein bS18.